A 380-amino-acid chain; its full sequence is Chaperone protein DnaJ (380 aa).

The 65-residue stretch at 5-69 (DLYKVLGVEK…QKRAQYDQFG (65 aa)) folds into the J domain. Residues 140 to 222 (GKKTTITYNR…CGGSGHTEQS (83 aa)) form a CR-type zinc finger. Positions 153, 156, 170, 173, 196, 199, 210, and 213 each coordinate Zn(2+). CXXCXGXG motif repeat units lie at residues 153–160 (CETCGGSG), 170–177 (CSKCHGAG), 196–203 (CDVCHGTG), and 210–217 (CATCGGSG).

It belongs to the DnaJ family. As to quaternary structure, homodimer. Zn(2+) serves as cofactor.

The protein resides in the cytoplasm. Its function is as follows. Participates actively in the response to hyperosmotic and heat shock by preventing the aggregation of stress-denatured proteins and by disaggregating proteins, also in an autonomous, DnaK-independent fashion. Unfolded proteins bind initially to DnaJ; upon interaction with the DnaJ-bound protein, DnaK hydrolyzes its bound ATP, resulting in the formation of a stable complex. GrpE releases ADP from DnaK; ATP binding to DnaK triggers the release of the substrate protein, thus completing the reaction cycle. Several rounds of ATP-dependent interactions between DnaJ, DnaK and GrpE are required for fully efficient folding. Also involved, together with DnaK and GrpE, in the DNA replication of plasmids through activation of initiation proteins. The protein is Chaperone protein DnaJ of Lactiplantibacillus plantarum (strain ATCC BAA-793 / NCIMB 8826 / WCFS1) (Lactobacillus plantarum).